The following is a 231-amino-acid chain: 5'-methylthioadenosine/S-adenosylhomocysteine nucleosidase (231 aa).

The active-site Proton acceptor is the Glu13. Residues Gly79, Met153, and 174 to 175 (ME) each bind substrate. Asp198 serves as the catalytic Proton donor.

Belongs to the PNP/UDP phosphorylase family. MtnN subfamily.

The enzyme catalyses S-adenosyl-L-homocysteine + H2O = S-(5-deoxy-D-ribos-5-yl)-L-homocysteine + adenine. The catalysed reaction is S-methyl-5'-thioadenosine + H2O = 5-(methylsulfanyl)-D-ribose + adenine. It catalyses the reaction 5'-deoxyadenosine + H2O = 5-deoxy-D-ribose + adenine. It participates in amino-acid biosynthesis; L-methionine biosynthesis via salvage pathway; S-methyl-5-thio-alpha-D-ribose 1-phosphate from S-methyl-5'-thioadenosine (hydrolase route): step 1/2. In terms of biological role, catalyzes the irreversible cleavage of the glycosidic bond in both 5'-methylthioadenosine (MTA) and S-adenosylhomocysteine (SAH/AdoHcy) to adenine and the corresponding thioribose, 5'-methylthioribose and S-ribosylhomocysteine, respectively. Also cleaves 5'-deoxyadenosine, a toxic by-product of radical S-adenosylmethionine (SAM) enzymes, into 5-deoxyribose and adenine. This Halalkalibacterium halodurans (strain ATCC BAA-125 / DSM 18197 / FERM 7344 / JCM 9153 / C-125) (Bacillus halodurans) protein is 5'-methylthioadenosine/S-adenosylhomocysteine nucleosidase.